The primary structure comprises 175 residues: Ribosome maturation factor RimM (175 aa).

In terms of domain architecture, PRC barrel spans E95–F175.

The protein belongs to the RimM family. Binds ribosomal protein uS19.

It is found in the cytoplasm. Functionally, an accessory protein needed during the final step in the assembly of 30S ribosomal subunit, possibly for assembly of the head region. Essential for efficient processing of 16S rRNA. May be needed both before and after RbfA during the maturation of 16S rRNA. It has affinity for free ribosomal 30S subunits but not for 70S ribosomes. The polypeptide is Ribosome maturation factor RimM (Glaesserella parasuis serovar 5 (strain SH0165) (Haemophilus parasuis)).